A 680-amino-acid polypeptide reads, in one-letter code: DNA ligase (680 aa).

Residues 44 to 48 (DHVYD), 93 to 94 (SM), and Glu-125 each bind NAD(+). Residue Lys-127 is the N6-AMP-lysine intermediate of the active site. NAD(+) is bound by residues Arg-148, Glu-182, Lys-298, and Lys-322. Positions 416, 419, 434, and 439 each coordinate Zn(2+). The BRCT domain occupies 600-680 (NPDSEWNGRR…QFSQAMKEEQ (81 aa)).

The protein belongs to the NAD-dependent DNA ligase family. LigA subfamily. Mg(2+) is required as a cofactor. Requires Mn(2+) as cofactor.

The enzyme catalyses NAD(+) + (deoxyribonucleotide)n-3'-hydroxyl + 5'-phospho-(deoxyribonucleotide)m = (deoxyribonucleotide)n+m + AMP + beta-nicotinamide D-nucleotide.. Functionally, DNA ligase that catalyzes the formation of phosphodiester linkages between 5'-phosphoryl and 3'-hydroxyl groups in double-stranded DNA using NAD as a coenzyme and as the energy source for the reaction. It is essential for DNA replication and repair of damaged DNA. The polypeptide is DNA ligase (Limosilactobacillus reuteri (strain DSM 20016) (Lactobacillus reuteri)).